A 31-amino-acid polypeptide reads, in one-letter code: MEALVYTFLLVGTLGIIFFAIFFREPPRIIK.

A helical membrane pass occupies residues 3–23 (ALVYTFLLVGTLGIIFFAIFF).

Belongs to the PsbT family. As to quaternary structure, PSII is composed of 1 copy each of membrane proteins PsbA, PsbB, PsbC, PsbD, PsbE, PsbF, PsbH, PsbI, PsbJ, PsbK, PsbL, PsbM, PsbT, PsbY, PsbZ, Psb30/Ycf12, at least 3 peripheral proteins of the oxygen-evolving complex and a large number of cofactors. It forms dimeric complexes.

The protein resides in the plastid. It localises to the chloroplast thylakoid membrane. Its function is as follows. Found at the monomer-monomer interface of the photosystem II (PS II) dimer, plays a role in assembly and dimerization of PSII. PSII is a light-driven water plastoquinone oxidoreductase, using light energy to abstract electrons from H(2)O, generating a proton gradient subsequently used for ATP formation. The chain is Photosystem II reaction center protein T from Mesostigma viride (Green alga).